We begin with the raw amino-acid sequence, 1843 residues long: Xin actin-binding repeat-containing protein 1 (1843 aa).

Residues 1–10 (MADTQTQVAP) show a composition bias toward polar residues. The tract at residues 1-48 (MADTQTQVAPTPTMRMATAEDLPLPPPPALEDLPLPPPKESFSKFHQQ) is disordered. Residues 1–54 (MADTQTQVAPTPTMRMATAEDLPLPPPPALEDLPLPPPKESFSKFHQQRQASEL) are interaction with VASP. Pro residues predominate over residues 23–39 (PLPPPPALEDLPLPPPK). 4 Xin repeats span residues 89-104 (GDVQCMRWIFENWRLD), 121-136 (GDVQATSRKFEEGSFA), 151-166 (GDVRAARWLFETKPLD), and 186-201 (GDVQGTRMLFETRPLD). The interval 132 to 151 (EGSFANSTDQEPTRPQPGGG) is disordered. 3 positions are modified to phosphoserine: S205, S208, and S213. Xin repeat units lie at residues 226 to 241 (GDVKKTVKLFQTEPLC) and 264 to 279 (NAVRSARWLFETRPLD). At S295 the chain carries Phosphoserine. One copy of the Xin 7 repeat lies at 302-317 (PDVSATRWIFETQPLD). S332 bears the Phosphoserine mark. Xin repeat units lie at residues 340–355 (PDVQQQQHLFETRALD) and 376–391 (GDVRSTLWLFETKPLD). The tract at residues 406-432 (DPQDGEGHLSSDSSSALPFSQSAPQRD) is disordered. Residues 415–429 (SSDSSSALPFSQSAP) show a composition bias toward low complexity. The stretch at 436-451 (GDVKTFKNLFETLPLD) is one Xin 10 repeat. Residues 455-479 (QGEVLAHGSPSREEGTDSAGQAQGI) form a disordered region. Xin repeat units follow at residues 507–522 (GDVQGYRWMFETQPLD) and 545–560 (GDVGTARWLFETQPLE). Residues 531–632 (IDVVRGITRQ…AQSCTWMFKP (102 aa)) are interaction with CTNNB1. Residues 564–577 (QREQQERQKEEGKS) show a composition bias toward basic and acidic residues. Positions 564-591 (QREQQERQKEEGKSQGDPQPEAPPKGDV) are disordered. Xin repeat units follow at residues 589–604 (GDVQTIRWLFETCPMS), 621–636 (AEAQSCTWMFKPQPVD), 654–669 (GERQTDRHVFETEPLQ), 691–706 (GQVSRQKEVFQALEAG), and 723–738 (GSVHKFTWLFENCPMG). 5 disordered regions span residues 943-999 (SLRW…QAIG), 1063-1205 (AEAQ…MAWG), 1238-1277 (SGPQAAGASPHPHNAFVPPPPTLPAAVTGPDFPAGAHRAE), 1289-1471 (DPLL…QKEL), and 1561-1696 (MSSL…DVSV). Polar residues-rich tracts occupy residues 1064-1073 (EAQSLHQQVL) and 1080-1089 (PTPTATSNPI). The span at 1294–1311 (SHSSPAGQRTPGGSQTKT) shows a compositional bias: polar residues. The span at 1357 to 1368 (GQREHQRGERDT) shows a compositional bias: basic and acidic residues. Polar residues predominate over residues 1393-1424 (GHSQPSLQHGLSTTAPRPTKNQATGSNAQSSE). The stretch at 1462 to 1490 (DSLQRNQKELQGLLNQVQALEKEAASSVD) forms a coiled coil. 2 stretches are compositionally biased toward polar residues: residues 1588–1600 (VTVSSSARPSGSG) and 1663–1679 (SRDSPSSPTFISIQSAT). An interaction with FLNC region spans residues 1685 to 1843 (TPSFKGNPDV…SCSYSQPAAQ (159 aa)).

The protein belongs to the Xin family. Interacts (via N-terminus) with CTTN; the interaction promotes CTTN localization to intercalated disks in cardiomyocytes. Interacts with CTNNB1. Interacts with FLNC and VASP. Interacts with F-actin. In terms of tissue distribution, expressed in skeletal muscle at areas of Z-disk disruption in a longitudinal pattern spanning one or more sarcomeres (at protein level). As to expression, expressed in the heart (at protein level). Expressed in the heart.

It is found in the cell junction. The protein resides in the adherens junction. The protein localises to the desmosome. Functionally, protects actin filaments from depolymerization. Required for correct cardiac intercalated disk ultrastructure via maintenance of cell-cell adhesion stability, and as a result maintains cardiac organ morphology, conductance and heart beat rhythm. Required for development of normal skeletal muscle morphology and muscle fiber type composition. Plays a role in regulating muscle satellite cell activation and survival, as a result promotes muscle fiber recovery from injury and fatigue. This chain is Xin actin-binding repeat-containing protein 1, found in Homo sapiens (Human).